The following is a 382-amino-acid chain: ATP phosphoribosyltransferase regulatory subunit (382 aa).

This sequence belongs to the class-II aminoacyl-tRNA synthetase family. HisZ subfamily. Heteromultimer composed of HisG and HisZ subunits.

It is found in the cytoplasm. It functions in the pathway amino-acid biosynthesis; L-histidine biosynthesis; L-histidine from 5-phospho-alpha-D-ribose 1-diphosphate: step 1/9. In terms of biological role, required for the first step of histidine biosynthesis. May allow the feedback regulation of ATP phosphoribosyltransferase activity by histidine. The sequence is that of ATP phosphoribosyltransferase regulatory subunit from Burkholderia cenocepacia (strain ATCC BAA-245 / DSM 16553 / LMG 16656 / NCTC 13227 / J2315 / CF5610) (Burkholderia cepacia (strain J2315)).